The chain runs to 337 residues: ATP-dependent 6-phosphofructokinase (337 aa).

Gly11 contacts ATP. ADP is bound at residue 21 to 25; sequence RAVVR. Residues 72-73 and 102-105 contribute to the ATP site; these read RY and GDGS. Asp103 is a binding site for Mg(2+). 125–127 is a substrate binding site; it reads TID. Asp127 serves as the catalytic Proton acceptor. An ADP-binding site is contributed by Arg154. Substrate is bound by residues Arg162 and 169-171; that span reads MGR. ADP-binding positions include 185-187 and 214-216; these read GAD and KNH. Residues Glu223, Arg245, and 251 to 254 contribute to the substrate site; that span reads HILR.

This sequence belongs to the phosphofructokinase type A (PFKA) family. ATP-dependent PFK group I subfamily. Prokaryotic clade 'B1' sub-subfamily. As to quaternary structure, homotetramer. It depends on Mg(2+) as a cofactor.

The protein localises to the cytoplasm. It catalyses the reaction beta-D-fructose 6-phosphate + ATP = beta-D-fructose 1,6-bisphosphate + ADP + H(+). Its pathway is carbohydrate degradation; glycolysis; D-glyceraldehyde 3-phosphate and glycerone phosphate from D-glucose: step 3/4. With respect to regulation, allosterically activated by ADP and other diphosphonucleosides, and allosterically inhibited by phosphoenolpyruvate. In terms of biological role, catalyzes the phosphorylation of D-fructose 6-phosphate to fructose 1,6-bisphosphate by ATP, the first committing step of glycolysis. This is ATP-dependent 6-phosphofructokinase from Streptococcus uberis (strain ATCC BAA-854 / 0140J).